A 387-amino-acid chain; its full sequence is Protein RecA (387 aa).

An ATP-binding site is contributed by 78–85; it reads GPESSGKT. Positions 350–369 are enriched in basic and acidic residues; the sequence is QTREVKSIERDPKETKETKS. Residues 350 to 387 are disordered; sequence QTREVKSIERDPKETKETKSKQPVSFSTEAEVDIAVGE.

The protein belongs to the RecA family.

It localises to the cytoplasm. Functionally, can catalyze the hydrolysis of ATP in the presence of single-stranded DNA, the ATP-dependent uptake of single-stranded DNA by duplex DNA, and the ATP-dependent hybridization of homologous single-stranded DNAs. It interacts with LexA causing its activation and leading to its autocatalytic cleavage. This is Protein RecA from Leptospira meyeri.